A 199-amino-acid polypeptide reads, in one-letter code: UPF0301 protein Ajs_3573 (199 aa).

Belongs to the UPF0301 (AlgH) family.

The protein is UPF0301 protein Ajs_3573 of Acidovorax sp. (strain JS42).